Consider the following 142-residue polypeptide: Large ribosomal subunit protein uL11 (142 aa).

It belongs to the universal ribosomal protein uL11 family. Part of the ribosomal stalk of the 50S ribosomal subunit. Interacts with L10 and the large rRNA to form the base of the stalk. L10 forms an elongated spine to which L12 dimers bind in a sequential fashion forming a multimeric L10(L12)X complex. In terms of processing, one or more lysine residues are methylated.

In terms of biological role, forms part of the ribosomal stalk which helps the ribosome interact with GTP-bound translation factors. The protein is Large ribosomal subunit protein uL11 of Photorhabdus laumondii subsp. laumondii (strain DSM 15139 / CIP 105565 / TT01) (Photorhabdus luminescens subsp. laumondii).